Here is a 1253-residue protein sequence, read N- to C-terminus: MEEHSYIQKELDLQNGSLEEDSVVHSVENDSQNMMESLSPKKYSSSLRFKANGDYSGSYLTLSQPVPAKRSPSPLGTSVRSSPSLAKIQGSKQFSYDGTDKNIPMKPPTPLLNTTSSLSGYPLGRADFDHYTGRDSERALRLSEKPPYSKYSSRHKSHDNVYSLGGLEGRKASGSLLAMWNGSSLSDAGPPPISRSGAASMPSSPKQARKMSIQDSLALQPKLTRHKELASENINLRTRKYSSSSLSHMGAYSRSLPRLYRATENQLTPLSLPPRNSLGNSKRTKLGEKDLPHSVIDNDNYLNFSSLSSGALPYKTSASEGNPYVSSTLSVPASPRVARKMLLASTSSCASDDFDQASYVGTNPSHSLLAGESDRVFATRRNFSCGSVEFDEADLESLRQASGTPQPALRERKSSISSISGRDDLMDYHRRQREERLREQEMERLERQRLETILSLCAEYTKPDSRLSTGTTVEDVQKINKELEKLQLSDEESVFEEALMSPDTRYRCHRKDSLPDADLASCGSLSQSSASFFTPRSTRNDELLSDLTRTPPPPSSTFPKASSESSYLSILPKTPEGISEEQRSQELAAMEETRIVILNNLEELKQKIKDINDQMDESFRELDMECALLDGEQKSETTELMKEKEILDHLNRKIAELEKNIVGEKTKEKVKLDAEREKLERLQELYSEQKTQLDNCPESMREQLQQQLKRDADLLDVESKHFEDLEFQQLEHESRLDEEKENLTQQLLREVAEYQRNIVSRKEKISALKKQANHIVQQAQREQDHFVKEKNNLIMMLQREKENLCNLEKKYSSLSGGKGFPVNPNTLKEGYISVNEINEPCGNSTNLSPSTQFPADADAVATEPATAVLASQPQSKEHFRSLEERKKQHKEGLYLSDTLPRKKTTSSISPHFSSATMGRSITPKAHLPLGQSNSCGSVLPPSLAAMAKDSESRRMLRGYNHQQMSEGHRQKSEFYNRTASESNVYLNSFHYPDHSYKDQAFDTLSLDSSDSMETSISACSPDNISSASTSNIARIEEMERLLKQAHAEKTRLLESREREMEAKKRALEEEKRRREILEKRLQEETSQRQKLIEKEVKIRERQRAQARPLTRYLPVRKEDFDLRSHVETAGHNIDTCYHVSITEKTCRGFLIKMGGKIKTWKKRWFVFDRNKRTFSYYADKHETKLKGVIYFQAIEEVYYDHLKNANKSPNPLLTFSVKTHDRIYYMVAPSPEAMRIWMDVIVTGAEGYTHFLL.

A compositionally biased stretch (basic and acidic residues) spans 1-12 (MEEHSYIQKELD). 3 disordered regions span residues 1-43 (MEEH…PKKY), 60-159 (LTLS…KSHD), and 187-212 (DAGPPPISRSGAASMPSSPKQARKMS). Positions 29–43 (NDSQNMMESLSPKKY) are enriched in polar residues. Phosphoserine occurs at positions 71 and 73. Residues 74 to 96 (PLGTSVRSSPSLAKIQGSKQFSY) are compositionally biased toward polar residues. Residues 126 to 144 (ADFDHYTGRDSERALRLSE) are compositionally biased toward basic and acidic residues. A phosphoserine mark is found at Ser-157, Ser-204, Ser-212, Ser-242, and Ser-245. The segment at 265-286 (NQLTPLSLPPRNSLGNSKRTKL) is disordered. A phosphoserine mark is found at Ser-330, Ser-334, Ser-348, Ser-351, Ser-384, Ser-387, Ser-415, Ser-420, Ser-468, Ser-489, and Ser-501. Thr-504 carries the post-translational modification Phosphothreonine. Ser-513 bears the Phosphoserine mark. The segment at 525 to 567 (LSQSSASFFTPRSTRNDELLSDLTRTPPPPSSTFPKASSESSY) is disordered. Residues Thr-550 and Thr-574 each carry the phosphothreonine modification. Coiled-coil stretches lie at residues 584–696 (SQEL…LDNC) and 722–807 (FEDL…LCNL). Thr-898 bears the Phosphothreonine mark. Residues 1032–1098 (IARIEEMERL…QKLIEKEVKI (67 aa)) are a coiled coil. The 104-residue stretch at 1143–1246 (EKTCRGFLIK…WMDVIVTGAE (104 aa)) folds into the PH domain.

As to quaternary structure, interacts with FLNC. Interacts with AMOTL2; interaction may facilitate PHLDB2 localization to the myotube podosome cortex that surrounds the core. Part of a cortical microtubule stabilization complex (CMSC) composed of KANK1, PPFIA1, PPFIBP1, ERC1/ELKS, PHLDB2/LL5beta, CLASPs, KIF21A and possibly additional interactors; within CMSCs KANK1 and PHLDB2/LL5beta appear to be the core components for targeting of microtubule-binding proteins KIF21A and CLASPs, whereas PPFIA1, PPFIBP1 and ERC1/ELKS serve as scaffolds for protein clustering.

Its subcellular location is the cytoplasm. It localises to the cell cortex. The protein resides in the membrane. The protein localises to the cell projection. It is found in the podosome. Seems to be involved in the assembly of the postsynaptic apparatus. May play a role in acetyl-choline receptor (AChR) aggregation in the postsynaptic membrane. This is Pleckstrin homology-like domain family B member 2 (PHLDB2) from Homo sapiens (Human).